The sequence spans 642 residues: Threonine--tRNA ligase (642 aa).

One can recognise a TGS domain in the interval 1–61 (MPIITLPDGS…SEDANLEIIT (61 aa)). Residues 243-534 (DHRKIGKALN…ITEEYAGFFP (292 aa)) form a catalytic region. Zn(2+)-binding residues include cysteine 334, histidine 385, and histidine 511.

The protein belongs to the class-II aminoacyl-tRNA synthetase family. In terms of assembly, homodimer. The cofactor is Zn(2+).

Its subcellular location is the cytoplasm. It carries out the reaction tRNA(Thr) + L-threonine + ATP = L-threonyl-tRNA(Thr) + AMP + diphosphate + H(+). Catalyzes the attachment of threonine to tRNA(Thr) in a two-step reaction: L-threonine is first activated by ATP to form Thr-AMP and then transferred to the acceptor end of tRNA(Thr). Also edits incorrectly charged L-seryl-tRNA(Thr). This Histophilus somni (strain 2336) (Haemophilus somnus) protein is Threonine--tRNA ligase.